A 277-amino-acid chain; its full sequence is 2,3,4,5-tetrahydropyridine-2,6-dicarboxylate N-succinyltransferase (277 aa).

2 residues coordinate substrate: R106 and D143.

Belongs to the transferase hexapeptide repeat family. As to quaternary structure, homotrimer.

The protein resides in the cytoplasm. The catalysed reaction is (S)-2,3,4,5-tetrahydrodipicolinate + succinyl-CoA + H2O = (S)-2-succinylamino-6-oxoheptanedioate + CoA. The protein operates within amino-acid biosynthesis; L-lysine biosynthesis via DAP pathway; LL-2,6-diaminopimelate from (S)-tetrahydrodipicolinate (succinylase route): step 1/3. This Variovorax paradoxus (strain S110) protein is 2,3,4,5-tetrahydropyridine-2,6-dicarboxylate N-succinyltransferase.